Reading from the N-terminus, the 141-residue chain is ATP synthase epsilon chain (141 aa).

It belongs to the ATPase epsilon chain family. In terms of assembly, F-type ATPases have 2 components, CF(1) - the catalytic core - and CF(0) - the membrane proton channel. CF(1) has five subunits: alpha(3), beta(3), gamma(1), delta(1), epsilon(1). CF(0) has three main subunits: a, b and c.

Its subcellular location is the cell inner membrane. In terms of biological role, produces ATP from ADP in the presence of a proton gradient across the membrane. This is ATP synthase epsilon chain from Hahella chejuensis (strain KCTC 2396).